The sequence spans 162 residues: EF-hand calcium-binding domain-containing protein 11 (162 aa).

3 EF-hand domains span residues 18-53 (SERRKWVKVFKACDEDNKGYLSREDFKVAIVMLFGY), 91-126 (LYRNEIRQIFTAFDVHYRGFLTLEDFKRAFSRVAPK), and 127-162 (LPARTVLEVFREADQDSDGHVSFRDFEYAMNHGQSK). Residues Asp140, Asp142, Asp144, His146, and Asp151 each contribute to the Ca(2+) site.

This is EF-hand calcium-binding domain-containing protein 11 (Efcab11) from Mus musculus (Mouse).